The chain runs to 1068 residues: Focal adhesion kinase 1 (1068 aa).

The interval 1-26 is disordered; that stretch reads MAAAYLDPNLNHNPSTNAKSRLSTGM. Residues 10-23 are compositionally biased toward polar residues; sequence LNHNPSTNAKSRLS. The FERM domain occupies 35-355; the sequence is RVLRVFHYFE…GYCRLVSGAS (321 aa). 2 positions are modified to phosphotyrosine: Y403 and Y413. The region spanning 435-693 is the Protein kinase domain; it reads IELGRCIGEG…ELKAQLSTIL (259 aa). ATP-binding positions include 441 to 447, K467, and 513 to 515; these read IGEGQFG and ELC. D559 serves as the catalytic Proton acceptor. Y589 and Y590 each carry phosphotyrosine; by autocatalysis. The segment covering 699–710 has biased composition (basic and acidic residues); it reads QQEERMRMESRR. 2 disordered regions span residues 699–750 and 869–912; these read QQEE…QHMM and GNQH…DGYN. 2 positions are modified to phosphotyrosine: Y874 and Y941.

The protein belongs to the protein kinase superfamily. Tyr protein kinase family. FAK subfamily. In terms of processing, phosphorylated on tyrosine residues; phosphorylated kinase is first detected during gastrulation, suggesting that tyrosine phosphorylation is developmentally regulated.

It is found in the cell junction. It localises to the focal adhesion. The protein resides in the cell membrane. Its subcellular location is the cytoplasm. The protein localises to the cytoskeleton. It is found in the cilium basal body. It catalyses the reaction L-tyrosyl-[protein] + ATP = O-phospho-L-tyrosyl-[protein] + ADP + H(+). Non-receptor protein-tyrosine kinase implicated in signaling pathways involved in cell motility, proliferation and apoptosis. Activated by tyrosine-phosphorylation in response to either integrin clustering induced by cell adhesion or antibody cross-linking, or via G-protein coupled receptor (GPCR) occupancy by ligands such as bombesin or lysophosphatidic acid, or via LDL receptor occupancy. Microtubule-induced dephosphorylation at Tyr-397 is crucial for the induction of focal adhesion disassembly. In Xenopus laevis (African clawed frog), this protein is Focal adhesion kinase 1 (ptk2).